The sequence spans 199 residues: Tropomyosin-1 (199 aa).

Positions 1–199 (MDKIREKLSN…DEIAASLENL (199 aa)) form a coiled coil. Glycyl lysine isopeptide (Lys-Gly) (interchain with G-Cter in ubiquitin) cross-links involve residues lysine 39 and lysine 59. 2 disordered regions span residues 59 to 81 (KLEAGLSDSKQTEQDNVEKENQI) and 102 to 147 (LAES…TEKL). Composition is skewed to basic and acidic residues over residues 68–80 (KQTEQDNVEKENQ) and 102–114 (LAESKQLSEDSHH). A compositionally biased stretch (polar residues) spans 115 to 126 (LQSNNDNFSKKN). Positions 136 to 147 (SDTKLKETTEKL) are enriched in basic and acidic residues. Lysine 187 is covalently cross-linked (Glycyl lysine isopeptide (Lys-Gly) (interchain with G-Cter in ubiquitin)). Serine 195 carries the post-translational modification Phosphoserine.

As to quaternary structure, homodimer.

The protein localises to the cytoplasm. It is found in the cytoskeleton. This is Tropomyosin-1 (TPM1) from Saccharomyces cerevisiae (strain ATCC 204508 / S288c) (Baker's yeast).